A 375-amino-acid polypeptide reads, in one-letter code: Decapping and exoribonuclease protein Rai1 (375 aa).

Residues Arg43 and 120 to 122 (LRG) contribute to the substrate site. The Mg(2+) site is built by Glu180, Glu222, Asp224, Glu247, and Leu248. Glu222 provides a ligand contact to substrate. Residues Lys249 and Gln274 each coordinate substrate.

The protein belongs to the DXO/Dom3Z family. In terms of assembly, interacts with Rat1. It depends on Mg(2+) as a cofactor.

The catalysed reaction is a 5'-end triphospho-ribonucleoside in mRNA + H2O = a 5'-end phospho-ribonucleoside in mRNA + diphosphate + H(+). It catalyses the reaction a 5'-end NAD(+)-phospho-ribonucleoside in mRNA + H2O = a 5'-end phospho-ribonucleoside in mRNA + NAD(+) + H(+). It carries out the reaction a 5'-end (N(7)-methyl 5'-triphosphoguanosine)-ribonucleoside-ribonucleotide in mRNA + H2O = a (N(7)-methyl 5'-triphosphoguanosine)-nucleoside + a 5'-end phospho-ribonucleoside in mRNA + H(+). Decapping enzyme for NAD-capped RNAs: specifically hydrolyzes the nicotinamide adenine dinucleotide (NAD) cap from a subset of RNAs by removing the entire NAD moiety from the 5'-end of an NAD-capped RNA. The NAD-cap is present at the 5'-end of some RNAs and snoRNAs. In contrast to the canonical 5'-end N7 methylguanosine (m7G) cap, the NAD cap promotes mRNA decay. Also acts as a non-canonical decapping enzyme that removes the entire cap structure of m7G capped or incompletely capped RNAs and mediates their subsequent degradation. Specifically degrades pre-mRNAs with a defective 5'-end m7G cap and is part of a pre-mRNA capping quality control. Possesses 5'-pyrophosphohydrolase activity, hydrolyzing the 5'-end triphosphate to release pyrophosphates, and 5'-3' exonuclease activity. May be involved in RNA degradation in the nucleus. The protein is Decapping and exoribonuclease protein Rai1 of Drosophila melanogaster (Fruit fly).